The following is a 180-amino-acid chain: Acireductone dioxygenase (180 aa).

Residues histidine 97, histidine 99, glutamate 103, and histidine 141 each contribute to the Fe(2+) site. Histidine 97, histidine 99, glutamate 103, and histidine 141 together coordinate Ni(2+).

This sequence belongs to the acireductone dioxygenase (ARD) family. As to quaternary structure, monomer. Requires Fe(2+) as cofactor. It depends on Ni(2+) as a cofactor.

It carries out the reaction 1,2-dihydroxy-5-(methylsulfanyl)pent-1-en-3-one + O2 = 3-(methylsulfanyl)propanoate + CO + formate + 2 H(+). The enzyme catalyses 1,2-dihydroxy-5-(methylsulfanyl)pent-1-en-3-one + O2 = 4-methylsulfanyl-2-oxobutanoate + formate + 2 H(+). It functions in the pathway amino-acid biosynthesis; L-methionine biosynthesis via salvage pathway; L-methionine from S-methyl-5-thio-alpha-D-ribose 1-phosphate: step 5/6. Functionally, catalyzes 2 different reactions between oxygen and the acireductone 1,2-dihydroxy-3-keto-5-methylthiopentene (DHK-MTPene) depending upon the metal bound in the active site. Fe-containing acireductone dioxygenase (Fe-ARD) produces formate and 2-keto-4-methylthiobutyrate (KMTB), the alpha-ketoacid precursor of methionine in the methionine recycle pathway. Ni-containing acireductone dioxygenase (Ni-ARD) produces methylthiopropionate, carbon monoxide and formate, and does not lie on the methionine recycle pathway. The polypeptide is Acireductone dioxygenase (Yersinia enterocolitica serotype O:8 / biotype 1B (strain NCTC 13174 / 8081)).